The primary structure comprises 272 residues: Digeranylgeranylglyceryl phosphate synthase (272 aa).

Helical transmembrane passes span 16-36, 79-99, 100-120, 124-144, 148-168, 194-214, 217-237, and 252-272; these read AFIA…EIIL, ALYY…IISL, ENGI…YDLK, FIGN…GGLI, VNLG…REII, AVML…LLYY, IFSI…VYSA, and ISKY…MGAL.

It belongs to the UbiA prenyltransferase family. DGGGP synthase subfamily. It depends on Mg(2+) as a cofactor.

It is found in the cell membrane. It carries out the reaction sn-3-O-(geranylgeranyl)glycerol 1-phosphate + (2E,6E,10E)-geranylgeranyl diphosphate = 2,3-bis-O-(geranylgeranyl)-sn-glycerol 1-phosphate + diphosphate. The protein operates within membrane lipid metabolism; glycerophospholipid metabolism. In terms of biological role, prenyltransferase that catalyzes the transfer of the geranylgeranyl moiety of geranylgeranyl diphosphate (GGPP) to the C2 hydroxyl of (S)-3-O-geranylgeranylglyceryl phosphate (GGGP). This reaction is the second ether-bond-formation step in the biosynthesis of archaeal membrane lipids. The polypeptide is Digeranylgeranylglyceryl phosphate synthase (Methanosphaera stadtmanae (strain ATCC 43021 / DSM 3091 / JCM 11832 / MCB-3)).